Reading from the N-terminus, the 388-residue chain is MSFQPTPEDRFTFGLWTVGWQGRDPFGDATRPALDPVETVQRLAELGAYGVTFHDDDLIPFGSSDTERESHIKRFRQALDATGMTVPMATTNLFTHPVFKDGGFTANDRDVRRYALRKTIGNIDLAAELGAKTYVAWGGREGAESGGAKDVRDALDRMKEAFDLLGEYVTAQGYDLRFAIEPKPNEPRGDILLPTVGHALAFIERLERPELYGVNPEVGHEQMAGLNFPHGIAQALWAGKLFHIDLNGQSGIKYDQDLRFGAGDLRAAFWLVDLLETAGYEGPRHFDFKPPRTEDFDGVWASAAGCMRNYLILKDRAAAFRADPEVQEALRAARLDQLAQPTAADGLDALLADRAAFEDFDVDAAAARGMAFEHLDQLAMDHLLGARG.

Catalysis depends on residues His54 and Asp57. Positions 181, 217, 220, 245, 255, 257, and 287 each coordinate Mg(2+).

This sequence belongs to the xylose isomerase family. As to quaternary structure, homotetramer. It depends on Mg(2+) as a cofactor.

The protein localises to the cytoplasm. The enzyme catalyses alpha-D-xylose = alpha-D-xylulofuranose. In terms of biological role, involved in D-xylose catabolism. This is Xylose isomerase (xylA) from Streptomyces murinus.